The primary structure comprises 202 residues: Peptide deformylase (202 aa).

Fe cation is bound by residues Cys121 and His163. Residue Glu164 is part of the active site. His167 serves as a coordination point for Fe cation.

This sequence belongs to the polypeptide deformylase family. The cofactor is Fe(2+).

It catalyses the reaction N-terminal N-formyl-L-methionyl-[peptide] + H2O = N-terminal L-methionyl-[peptide] + formate. Its function is as follows. Removes the formyl group from the N-terminal Met of newly synthesized proteins. Requires at least a dipeptide for an efficient rate of reaction. N-terminal L-methionine is a prerequisite for activity but the enzyme has broad specificity at other positions. This Synechococcus sp. (strain CC9311) protein is Peptide deformylase.